Here is a 151-residue protein sequence, read N- to C-terminus: Small ribosomal subunit protein bS6 (151 aa).

Residues 98–151 form a disordered region; that stretch reads EESPIQKAEKENRERKNRAERRAAEAAAATETEKSESEESAEEETSTDTTGEEE. Acidic residues predominate over residues 135–151; it reads EESAEEETSTDTTGEEE.

The protein belongs to the bacterial ribosomal protein bS6 family.

Its function is as follows. Binds together with bS18 to 16S ribosomal RNA. The chain is Small ribosomal subunit protein bS6 from Teredinibacter turnerae (strain ATCC 39867 / T7901).